Reading from the N-terminus, the 488-residue chain is GTPase Der (488 aa).

2 EngA-type G domains span residues 3–166 and 201–374; these read PVVA…VSDG and IKLA…QCAT. GTP-binding positions include 9-16, 56-60, 118-121, 207-214, 254-258, and 319-322; these read GRPNVGKS, DTGGI, NKTD, DTAGV, and NKWD. The region spanning 375–459 is the KH-like domain; the sequence is KRVSTALLTR…PIRIQFNEGA (85 aa).

It belongs to the TRAFAC class TrmE-Era-EngA-EngB-Septin-like GTPase superfamily. EngA (Der) GTPase family. In terms of assembly, associates with the 50S ribosomal subunit.

Functionally, GTPase that plays an essential role in the late steps of ribosome biogenesis. The protein is GTPase Der of Sodalis glossinidius (strain morsitans).